The chain runs to 201 residues: Recombination protein RecR (201 aa).

A C4-type zinc finger spans residues C59 to C74. The Toprim domain maps to S82 to P177.

The protein belongs to the RecR family.

Its function is as follows. May play a role in DNA repair. It seems to be involved in an RecBC-independent recombinational process of DNA repair. It may act with RecF and RecO. This Rickettsia massiliae (strain Mtu5) protein is Recombination protein RecR.